The primary structure comprises 236 residues: Methylosome subunit pICln (236 aa).

Serine 2 carries the post-translational modification N-acetylserine. Positions 88–109 (EESKEPPSDEDEEDNDDIEPIS) are disordered. Phosphoserine is present on residues serine 95, serine 143, serine 192, serine 194, serine 197, and serine 209. Positions 95–107 (SDEDEEDNDDIEP) are enriched in acidic residues. Threonine 222 is modified (phosphothreonine).

The protein belongs to the pICln (TC 1.A.47) family. As to quaternary structure, component of the methylosome, a 20S complex containing at least PRMT5/SKB1, WDR77/MEP50 and CLNS1A/pICln. May mediate SNRPD1 and SNRPD3 methylation. Forms a 6S pICln-Sm complex composed of CLNS1A/pICln, SNRPD1, SNRPD2, SNRPE, SNRPF and SNRPG; ring-like structure where CLNS1A/pICln mimics additional Sm proteins and which is unable to assemble into the core snRNP. Interacts with LSM10 and LSM11.

Its subcellular location is the cytoplasm. It is found in the cytosol. It localises to the nucleus. The protein resides in the cytoskeleton. Involved in both the assembly of spliceosomal snRNPs and the methylation of Sm proteins. Chaperone that regulates the assembly of spliceosomal U1, U2, U4 and U5 small nuclear ribonucleoproteins (snRNPs), the building blocks of the spliceosome, and thereby plays an important role in the splicing of cellular pre-mRNAs. Most spliceosomal snRNPs contain a common set of Sm proteins SNRPB, SNRPD1, SNRPD2, SNRPD3, SNRPE, SNRPF and SNRPG that assemble in a heptameric protein ring on the Sm site of the small nuclear RNA to form the core snRNP (Sm core). In the cytosol, the Sm proteins SNRPD1, SNRPD2, SNRPE, SNRPF and SNRPG are trapped in an inactive 6S pICln-Sm complex by the chaperone CLNS1A that controls the assembly of the core snRNP. Dissociation by the SMN complex of CLNS1A from the trapped Sm proteins and their transfer to an SMN-Sm complex triggers the assembly of core snRNPs and their transport to the nucleus. This is Methylosome subunit pICln (Clns1a) from Mus musculus (Mouse).